A 172-amino-acid chain; its full sequence is Adenine phosphoribosyltransferase (172 aa).

Belongs to the purine/pyrimidine phosphoribosyltransferase family. As to quaternary structure, homodimer.

Its subcellular location is the cytoplasm. It catalyses the reaction AMP + diphosphate = 5-phospho-alpha-D-ribose 1-diphosphate + adenine. Its pathway is purine metabolism; AMP biosynthesis via salvage pathway; AMP from adenine: step 1/1. Catalyzes a salvage reaction resulting in the formation of AMP, that is energically less costly than de novo synthesis. This chain is Adenine phosphoribosyltransferase, found in Crocosphaera subtropica (strain ATCC 51142 / BH68) (Cyanothece sp. (strain ATCC 51142)).